The chain runs to 577 residues: MNIQALLSEKVSQAMIAAGAPADCEPQVRQSAKVQFGDYQANGMMAVAKKLGMAPRQLAEQVLTHLDLSGIASKVEIAGPGFINIFLEPAFLAEQVQQALASERLGVSQPTRQTIVVDYSAPNVAKEMHVGHLRSTIIGDAAVRTLEFLGHHVIRANHVGDWGTQFGMLIAWLEKQQQENAGDMALADLEGFYRDAKKHYDEDEAFAERARNYVVKLQSGDAYFREMWRKLVDITMTQNQITYDRLNVTLTRDDVMGESLYNPMLPGIVADLKAKGLAVESEGATVVFLDEFKNKEGDPMGVIIQKKDGGYLYTTTDIACAKYRYETLHADRVLYYIDSRQHQHLMQAWTIVRKAGYVPDSVPLEHHMFGMMLGKDGKPFKTRAGGTVKLADLLDEALERARRLVAEKNPDMPADELEKLANAVGIGAVKYADLSKNRTTDYIFDWDNMLAFEGNTAPYMQYAYTRVLSVFRKADIDEQALASAPVIISEDREAQLAARLLQFEETLTVVAREGTPHVMCAYLYDVAGLFSGFYEHCPILSAENDAVRNSRLKLAQLTAKTLKLGLDTLGIETVERM.

Positions 122–132 (PNVAKEMHVGH) match the 'HIGH' region motif.

Belongs to the class-I aminoacyl-tRNA synthetase family. As to quaternary structure, monomer.

The protein localises to the cytoplasm. The enzyme catalyses tRNA(Arg) + L-arginine + ATP = L-arginyl-tRNA(Arg) + AMP + diphosphate. In Salmonella agona (strain SL483), this protein is Arginine--tRNA ligase.